Reading from the N-terminus, the 179-residue chain is Large ribosomal subunit protein bL19 (179 aa).

The protein belongs to the bacterial ribosomal protein bL19 family.

Functionally, this protein is located at the 30S-50S ribosomal subunit interface and may play a role in the structure and function of the aminoacyl-tRNA binding site. In Rhizobium johnstonii (strain DSM 114642 / LMG 32736 / 3841) (Rhizobium leguminosarum bv. viciae), this protein is Large ribosomal subunit protein bL19.